A 368-amino-acid chain; its full sequence is Peptide chain release factor 2 (368 aa).

The disordered stretch occupies residues 36–56 (EAQAGDPSLWDDPDHAQKVTS). Glutamine 250 is subject to N5-methylglutamine.

This sequence belongs to the prokaryotic/mitochondrial release factor family. In terms of processing, methylated by PrmC. Methylation increases the termination efficiency of RF2.

It is found in the cytoplasm. Its function is as follows. Peptide chain release factor 2 directs the termination of translation in response to the peptide chain termination codons UGA and UAA. The chain is Peptide chain release factor 2 from Corynebacterium aurimucosum (strain ATCC 700975 / DSM 44827 / CIP 107346 / CN-1) (Corynebacterium nigricans).